Consider the following 262-residue polypeptide: Thioredoxin-like protein HCF164, chloroplastic (262 aa).

A chloroplast-targeting transit peptide spans 1 to 54; the sequence is MAVVASRCTGLLLPDLGASLAGFRRRRSTPASSLSFRPRRARRRLGSLSCIAPP. The tract at residues 47 to 90 is disordered; it reads SLSCIAPPDSAEPQTDEPAAKDDSTEDKAEASSASQDAGNPTFP. The span at 64 to 76 shows a compositional bias: basic and acidic residues; that stretch reads PAAKDDSTEDKAE. The segment covering 78 to 89 has biased composition (polar residues); it reads SSASQDAGNPTF. A Thioredoxin domain is found at 78-230; it reads SSASQDAGNP…FLDNVVALAS (153 aa). Active-site nucleophile residues include Cys-151 and Cys-154. Cys-151 and Cys-154 are joined by a disulfide.

This sequence belongs to the thioredoxin family.

It localises to the plastid. The protein localises to the chloroplast. Its function is as follows. Probable thiol-disulfide oxidoreductase that may participate in various redox reactions in the chloroplast. This Oryza sativa subsp. japonica (Rice) protein is Thioredoxin-like protein HCF164, chloroplastic.